The following is a 437-amino-acid chain: 26S proteasome subunit RPT4 (437 aa).

Residues 1–51 (MSEEQDPLLAGLGETSGDNHTQQSHEQQPEQPQETEEHHEEEPSRVDPEQE) are disordered. Position 2 is an N-acetylserine (serine 2). Positions 20–32 (HTQQSHEQQPEQP) are enriched in low complexity. Residues 35–51 (TEEHHEEEPSRVDPEQE) are compositionally biased toward basic and acidic residues. ATP is bound at residue 222 to 229 (GPPGTGKT).

It belongs to the AAA ATPase family. N-acetylated by NAT1.

The 26S proteasome is involved in the ATP-dependent degradation of ubiquitinated proteins. The regulatory (or ATPase) complex confers ATP dependency and substrate specificity to the 26S complex. The sequence is that of 26S proteasome subunit RPT4 (RPT4) from Saccharomyces cerevisiae (strain ATCC 204508 / S288c) (Baker's yeast).